A 443-amino-acid chain; its full sequence is tRNA-2-methylthio-N(6)-dimethylallyladenosine synthase (443 aa).

The MTTase N-terminal domain occupies 3 to 120 (SKLYIRTFGC…LPDLIDARRR (118 aa)). Cysteine 12, cysteine 49, cysteine 83, cysteine 157, cysteine 161, and cysteine 164 together coordinate [4Fe-4S] cluster. In terms of domain architecture, Radical SAM core spans 143–375 (RTEGSTAFVS…QEKIQLNAQA (233 aa)). Residues 378–441 (QGMVDTVQRI…SHTLRGEISD (64 aa)) enclose the TRAM domain.

The protein belongs to the methylthiotransferase family. MiaB subfamily. Monomer. [4Fe-4S] cluster is required as a cofactor.

Its subcellular location is the cytoplasm. It carries out the reaction N(6)-dimethylallyladenosine(37) in tRNA + (sulfur carrier)-SH + AH2 + 2 S-adenosyl-L-methionine = 2-methylsulfanyl-N(6)-dimethylallyladenosine(37) in tRNA + (sulfur carrier)-H + 5'-deoxyadenosine + L-methionine + A + S-adenosyl-L-homocysteine + 2 H(+). Its function is as follows. Catalyzes the methylthiolation of N6-(dimethylallyl)adenosine (i(6)A), leading to the formation of 2-methylthio-N6-(dimethylallyl)adenosine (ms(2)i(6)A) at position 37 in tRNAs that read codons beginning with uridine. The sequence is that of tRNA-2-methylthio-N(6)-dimethylallyladenosine synthase from Nitrosomonas europaea (strain ATCC 19718 / CIP 103999 / KCTC 2705 / NBRC 14298).